Reading from the N-terminus, the 84-residue chain is Small ribosomal subunit protein uS17 (84 aa).

It belongs to the universal ribosomal protein uS17 family. As to quaternary structure, part of the 30S ribosomal subunit.

One of the primary rRNA binding proteins, it binds specifically to the 5'-end of 16S ribosomal RNA. The chain is Small ribosomal subunit protein uS17 from Clostridium acetobutylicum (strain ATCC 824 / DSM 792 / JCM 1419 / IAM 19013 / LMG 5710 / NBRC 13948 / NRRL B-527 / VKM B-1787 / 2291 / W).